Consider the following 178-residue polypeptide: Prion-like protein doppel (178 aa).

The N-terminal stretch at 1 to 25 (MRKHLGGCWLAIVCVLLFSQLSSVK) is a signal peptide. The segment at 27–50 (RGIKHRIKWNRKVLPSTSQVTEAH) is flexible tail. Residues 51–154 (TAEIRPGAFI…KHCDFWLERG (104 aa)) form a globular region. Disulfide bonds link Cys-94-Cys-147 and Cys-108-Cys-142. 2 N-linked (GlcNAc...) asparagine glycosylation sites follow: Asn-98 and Asn-110. A cu(2+) binding region spans residues 124-141 (KQDNKLYQRVLWQLIREL). The GPI-anchor amidated glycine moiety is linked to residue Gly-154. A propeptide spans 155 to 178 (AGLQVTLDQPMMLCLLVFIWFIVK) (removed in mature form).

It belongs to the prion family. N-glycosylated. Post-translationally, O-glycosylated. As to expression, strongly expressed in testis. Detected at low levels in lymph node, spleen and ovary.

The protein resides in the cell membrane. Required for normal acrosome reaction and for normal male fertility. Can bind Cu(2+). This chain is Prion-like protein doppel (PRND), found in Ovis aries (Sheep).